The primary structure comprises 423 residues: SH2 domain-containing protein 5 (423 aa).

Residues 28-146 enclose the PID domain; the sequence is AQYVGSFPVD…LLCRSFQLAY (119 aa). The SH2 domain occupies 296 to 392; the sequence is WAFAGISRPC…LDMGRLNPTY (97 aa). Residues 392 to 423 are disordered; that stretch reads YEEQDCGPPGRPPRTLRPLSHAKSEAELQGLG.

As to quaternary structure, interacts with BCR.

The protein localises to the postsynaptic density. Functionally, may be involved in synaptic plasticity regulation through the control of Rac-GTP levels. This chain is SH2 domain-containing protein 5, found in Homo sapiens (Human).